We begin with the raw amino-acid sequence, 102 residues long: NADH-quinone oxidoreductase subunit K 2 (102 aa).

3 helical membrane passes run 1–21 (MIVP…LGLV), 30–50 (IIMM…AFVG), and 65–85 (LMIM…VVYL).

It belongs to the complex I subunit 4L family. In terms of assembly, NDH-1 is composed of 14 different subunits. Subunits NuoA, H, J, K, L, M, N constitute the membrane sector of the complex.

It is found in the cell inner membrane. The enzyme catalyses a quinone + NADH + 5 H(+)(in) = a quinol + NAD(+) + 4 H(+)(out). Functionally, NDH-1 shuttles electrons from NADH, via FMN and iron-sulfur (Fe-S) centers, to quinones in the respiratory chain. The immediate electron acceptor for the enzyme in this species is believed to be ubiquinone. Couples the redox reaction to proton translocation (for every two electrons transferred, four hydrogen ions are translocated across the cytoplasmic membrane), and thus conserves the redox energy in a proton gradient. This chain is NADH-quinone oxidoreductase subunit K 2, found in Geotalea daltonii (strain DSM 22248 / JCM 15807 / FRC-32) (Geobacter daltonii).